A 726-amino-acid chain; its full sequence is WD repeat and coiled-coil-containing protein (726 aa).

WD repeat units follow at residues 55–98 (GQFE…LDKN) and 154–194 (KSSG…LNAC). A disordered region spans residues 503 to 571 (SYDGDQSPTS…SSPPNFIKHG (69 aa)). The segment covering 506–515 (GDQSPTSSAN) has biased composition (polar residues). Residues 517–535 (FDDKRSKLRVESLDTEPKN) show a composition bias toward basic and acidic residues. A compositionally biased stretch (polar residues) spans 550–565 (SRPTSPKSECQKSSPP). Positions 581–609 (SISRNVERLCCNFAHLQQHLSELTDITRN) form a coiled coil.

This chain is WD repeat and coiled-coil-containing protein (wdcp), found in Xenopus tropicalis (Western clawed frog).